The chain runs to 456 residues: CBL-interacting protein kinase 9 (456 aa).

One can recognise a Protein kinase domain in the interval 27–282; sequence YELGKTIGEG…IAQILEDDWF (256 aa). ATP contacts are provided by residues 33-41 and K56; that span reads IGEGSFAKV. D150 functions as the Proton acceptor in the catalytic mechanism. Residues 168–197 are activation loop; the sequence is DFGLSAFAPQTKEDGLLHTACGTPNYVAPE. Residues 318-343 enclose the NAF domain; the sequence is REKPESMNAFALISRSQGFNLGNLFE. The segment at 351-380 is PPI; sequence KRETSFTSQCTPQEIMSKIEEACGPLGFNV.

The protein belongs to the protein kinase superfamily. CAMK Ser/Thr protein kinase family. SNF1 subfamily. Mn(2+) is required as a cofactor.

It carries out the reaction L-seryl-[protein] + ATP = O-phospho-L-seryl-[protein] + ADP + H(+). The enzyme catalyses L-threonyl-[protein] + ATP = O-phospho-L-threonyl-[protein] + ADP + H(+). In terms of biological role, CIPK serine-threonine protein kinases interact with CBL proteins. Binding of a CBL protein to the regulatory NAF domain of CIPK protein lead to the activation of the kinase in a calcium-dependent manner. This is CBL-interacting protein kinase 9 (CIPK9) from Oryza sativa subsp. japonica (Rice).